Reading from the N-terminus, the 334-residue chain is MTQKNLLLLCGGGGDEHSISLLSANFFEAQLATLPHFNVLRVELNAKGQYHTQAGELCELTNSQQLRFDDETKAPWNVDYVIPCIHGYPGETGDIQSYFELINLPYFGCDSESSSNCFNKVTAKMWFSALGIPNTPYIFLSEFNQQSLEQAEAALAKWGSIFIKAASQGSSVGCYRVDSIEQLASSLEEAFTFSPYVVIEKTITARELEVAAYEADGEIIATKPGEIICASNTFYSFDEKYAENSQAQTVIEADVDEAIAKQIQEYAIKAFKGMKLRHLSRIDFFLTEDNEILLNEINTFPGQTQISMFPKMLQNHGHNFAQYLSGNILAQLKS.

The 206-residue stretch at 124 to 329 (KMWFSALGIP…FAQYLSGNIL (206 aa)) folds into the ATP-grasp domain. Position 154 to 209 (154 to 209 (ALAKWGSIFIKAASQGSSVGCYRVDSIEQLASSLEEAFTFSPYVVIEKTITARELE)) interacts with ATP. Mg(2+)-binding residues include D283, E296, and N298.

The protein belongs to the D-alanine--D-alanine ligase family. The cofactor is Mg(2+). Mn(2+) serves as cofactor.

Its subcellular location is the cytoplasm. It catalyses the reaction 2 D-alanine + ATP = D-alanyl-D-alanine + ADP + phosphate + H(+). It functions in the pathway cell wall biogenesis; peptidoglycan biosynthesis. Cell wall formation. The chain is D-alanine--D-alanine ligase from Shewanella pealeana (strain ATCC 700345 / ANG-SQ1).